Here is a 120-residue protein sequence, read N- to C-terminus: Putative pterin-4-alpha-carbinolamine dehydratase (120 aa).

This sequence belongs to the pterin-4-alpha-carbinolamine dehydratase family.

The catalysed reaction is (4aS,6R)-4a-hydroxy-L-erythro-5,6,7,8-tetrahydrobiopterin = (6R)-L-erythro-6,7-dihydrobiopterin + H2O. In Bdellovibrio bacteriovorus (strain ATCC 15356 / DSM 50701 / NCIMB 9529 / HD100), this protein is Putative pterin-4-alpha-carbinolamine dehydratase.